We begin with the raw amino-acid sequence, 65 residues long: Conotoxin tx3c (65 aa).

Residues 1 to 19 (MFKLGVLLTICLLLFSLNA) form the signal peptide. The propeptide occupies 20–50 (VPLDGDQPADQPAERLLDDISFENNPFYDPA). Cystine bridges form between Cys-53-Cys-64, Cys-54-Cys-60, and Cys-57-Cys-63. Pro-62 carries the 4-hydroxyproline; partial modification. Cys-64 carries the post-translational modification Cysteine amide.

The hydroxylation at Pro-62 is observed in PubMed:15924437, PubMed:19380747 and PubMed:22709442, and the non-hydroxylation is described in PubMed:22709442. In terms of tissue distribution, expressed by the venom duct.

Its subcellular location is the secreted. Its function is as follows. Causes scratching in mice. The sequence is that of Conotoxin tx3c from Conus textile (Cloth-of-gold cone).